A 278-amino-acid chain; its full sequence is MTKPNARVKVGNIIFSNEMPLSLIAGPCQMESRDHAFEMAGRIKTMTDQLGIGFVYKSSYDKANRTSLSAARGIGLEKAMAIFSDLKKEFDCPILTDVHTEEQCTIVSSTVDILQIPAFLCRQTDLLVAAAKTGCVVNIKKGQFLAPWDMENVLKKVVHSGNPNVMLCERGTSFGYNRLISDMRSLPILRSFGAPVIFDATHSVQEPGGQGASSGGQRQFVEVLARAAVSVGVAGIFLETHQDPDHAPSDGPNMIKIDDLQRLIETLMEFDDLSKKLN.

This sequence belongs to the KdsA family.

It localises to the cytoplasm. The catalysed reaction is D-arabinose 5-phosphate + phosphoenolpyruvate + H2O = 3-deoxy-alpha-D-manno-2-octulosonate-8-phosphate + phosphate. It functions in the pathway carbohydrate biosynthesis; 3-deoxy-D-manno-octulosonate biosynthesis; 3-deoxy-D-manno-octulosonate from D-ribulose 5-phosphate: step 2/3. Its pathway is bacterial outer membrane biogenesis; lipopolysaccharide biosynthesis. This is 2-dehydro-3-deoxyphosphooctonate aldolase from Bartonella tribocorum (strain CIP 105476 / IBS 506).